The primary structure comprises 321 residues: Tetraacyldisaccharide 4'-kinase (321 aa).

Residue 54-61 participates in ATP binding; the sequence is SVGGTGKT.

It belongs to the LpxK family.

It catalyses the reaction a lipid A disaccharide + ATP = a lipid IVA + ADP + H(+). It functions in the pathway glycolipid biosynthesis; lipid IV(A) biosynthesis; lipid IV(A) from (3R)-3-hydroxytetradecanoyl-[acyl-carrier-protein] and UDP-N-acetyl-alpha-D-glucosamine: step 6/6. Its function is as follows. Transfers the gamma-phosphate of ATP to the 4'-position of a tetraacyldisaccharide 1-phosphate intermediate (termed DS-1-P) to form tetraacyldisaccharide 1,4'-bis-phosphate (lipid IVA). In Rickettsia peacockii (strain Rustic), this protein is Tetraacyldisaccharide 4'-kinase.